The primary structure comprises 346 residues: Holliday junction branch migration complex subunit RuvB (346 aa).

The span at 1–11 (MTEQRTIASSA) shows a compositional bias: polar residues. The disordered stretch occupies residues 1-20 (MTEQRTIASSATREDEAADA). The interval 1 to 183 (MTEQRTIASS…FGIVQRLEFY (183 aa)) is large ATPase domain (RuvB-L). ATP contacts are provided by residues Ile-22, Arg-23, Gly-64, Lys-67, Thr-68, Thr-69, 130-132 (EDF), Arg-173, Tyr-183, and Arg-220. Thr-68 lines the Mg(2+) pocket. The segment at 184–254 (SPQELTRIVI…VAQAAMQMLK (71 aa)) is small ATPAse domain (RuvB-S). The head domain (RuvB-H) stretch occupies residues 257–346 (PEGFDELDRR…PAIGEPGDLF (90 aa)). Positions 293, 312, and 317 each coordinate DNA.

The protein belongs to the RuvB family. As to quaternary structure, homohexamer. Forms an RuvA(8)-RuvB(12)-Holliday junction (HJ) complex. HJ DNA is sandwiched between 2 RuvA tetramers; dsDNA enters through RuvA and exits via RuvB. An RuvB hexamer assembles on each DNA strand where it exits the tetramer. Each RuvB hexamer is contacted by two RuvA subunits (via domain III) on 2 adjacent RuvB subunits; this complex drives branch migration. In the full resolvosome a probable DNA-RuvA(4)-RuvB(12)-RuvC(2) complex forms which resolves the HJ.

Its subcellular location is the cytoplasm. The catalysed reaction is ATP + H2O = ADP + phosphate + H(+). Its function is as follows. The RuvA-RuvB-RuvC complex processes Holliday junction (HJ) DNA during genetic recombination and DNA repair, while the RuvA-RuvB complex plays an important role in the rescue of blocked DNA replication forks via replication fork reversal (RFR). RuvA specifically binds to HJ cruciform DNA, conferring on it an open structure. The RuvB hexamer acts as an ATP-dependent pump, pulling dsDNA into and through the RuvAB complex. RuvB forms 2 homohexamers on either side of HJ DNA bound by 1 or 2 RuvA tetramers; 4 subunits per hexamer contact DNA at a time. Coordinated motions by a converter formed by DNA-disengaged RuvB subunits stimulates ATP hydrolysis and nucleotide exchange. Immobilization of the converter enables RuvB to convert the ATP-contained energy into a lever motion, pulling 2 nucleotides of DNA out of the RuvA tetramer per ATP hydrolyzed, thus driving DNA branch migration. The RuvB motors rotate together with the DNA substrate, which together with the progressing nucleotide cycle form the mechanistic basis for DNA recombination by continuous HJ branch migration. Branch migration allows RuvC to scan DNA until it finds its consensus sequence, where it cleaves and resolves cruciform DNA. The protein is Holliday junction branch migration complex subunit RuvB of Xanthomonas campestris pv. campestris (strain ATCC 33913 / DSM 3586 / NCPPB 528 / LMG 568 / P 25).